Reading from the N-terminus, the 1700-residue chain is Probable serine/threonine-protein kinase ifkC (1700 aa).

The interval 1-25 (MPPKPKQKAKQPSQQPPPPPPPAAA) is disordered. A compositionally biased stretch (pro residues) spans 14–23 (QQPPPPPPPA). One can recognise an RWD domain in the interval 74 to 197 (MELEALQAIF…EIAKDFLNEN (124 aa)). Over residues 454 to 463 (GLKKSPSTFE) the composition is skewed to polar residues. Positions 454–488 (GLKKSPSTFEYSGEGGGGGVGGGSSQKTINPHQQS) are disordered. A compositionally biased stretch (gly residues) spans 466–477 (GEGGGGGVGGGS). Positions 479–488 (QKTINPHQQS) are enriched in polar residues. Positions 494-1027 (FEEIQLLGRG…AQQLLQSELM (534 aa)) constitute a Protein kinase domain. Residues 500 to 508 (LGRGGFGQV) and lysine 523 contribute to the ATP site. Disordered regions lie at residues 568–639 (LTND…ENND) and 689–760 (GNNT…SSSK). Residues 572–639 (NSDDDDDDDD…SEFESEENND (68 aa)) show a composition bias toward acidic residues. A compositionally biased stretch (low complexity) spans 697 to 735 (SSNQHLQQQQQQNQSQQQKKQPQQNQSQQQKKLKNSNSK). Over residues 736–752 (SKSKSKSKSKSKSKSNS) the composition is skewed to basic residues. Catalysis depends on aspartate 822, which acts as the Proton acceptor. Low complexity-rich tracts occupy residues 850–875 (TSTL…SSNS), 1135–1158 (NNSS…NTNS), 1230–1240 (SSNGNSNNNNS), and 1509–1531 (NNSN…SYNN). Disordered regions lie at residues 850-901 (TSTL…EVEG), 1134-1160 (FNNS…NSVV), 1216-1253 (KHHH…SNTT), and 1507-1531 (NLNN…SYNN).

This sequence belongs to the protein kinase superfamily. Ser/Thr protein kinase family. GCN2 subfamily.

The catalysed reaction is L-seryl-[protein] + ATP = O-phospho-L-seryl-[protein] + ADP + H(+). It catalyses the reaction L-threonyl-[protein] + ATP = O-phospho-L-threonyl-[protein] + ADP + H(+). This Dictyostelium discoideum (Social amoeba) protein is Probable serine/threonine-protein kinase ifkC (ifkC).